The primary structure comprises 123 residues: Large ribosomal subunit protein uL14 (123 aa).

Belongs to the universal ribosomal protein uL14 family. In terms of assembly, part of the 50S ribosomal subunit. Forms a cluster with proteins L3 and L19. In the 70S ribosome, L14 and L19 interact and together make contacts with the 16S rRNA in bridges B5 and B8.

Binds to 23S rRNA. Forms part of two intersubunit bridges in the 70S ribosome. The protein is Large ribosomal subunit protein uL14 of Actinobacillus pleuropneumoniae serotype 7 (strain AP76).